We begin with the raw amino-acid sequence, 79 residues long: Small ribosomal subunit protein bS18B (79 aa).

Belongs to the bacterial ribosomal protein bS18 family. As to quaternary structure, part of the 30S ribosomal subunit. Forms a tight heterodimer with protein bS6.

Binds as a heterodimer with protein bS6 to the central domain of the 16S rRNA, where it helps stabilize the platform of the 30S subunit. The protein is Small ribosomal subunit protein bS18B of Mycolicibacterium gilvum (strain PYR-GCK) (Mycobacterium gilvum (strain PYR-GCK)).